The chain runs to 373 residues: Spore coat polysaccharide biosynthesis protein SpsE (373 aa).

An AFP-like domain is found at 305–367 (GIFTTAPIQK…GIVWDDILLK (63 aa)).

The protein operates within spore coat biogenesis; spore coat polysaccharide biosynthesis. This Bacillus subtilis (strain 168) protein is Spore coat polysaccharide biosynthesis protein SpsE (spsE).